The sequence spans 400 residues: Nicotinate phosphoribosyltransferase (400 aa).

At His220 the chain carries Phosphohistidine; by autocatalysis.

This sequence belongs to the NAPRTase family. Transiently phosphorylated on a His residue during the reaction cycle. Phosphorylation strongly increases the affinity for substrates and increases the rate of nicotinate D-ribonucleotide production. Dephosphorylation regenerates the low-affinity form of the enzyme, leading to product release.

The catalysed reaction is nicotinate + 5-phospho-alpha-D-ribose 1-diphosphate + ATP + H2O = nicotinate beta-D-ribonucleotide + ADP + phosphate + diphosphate. Its pathway is cofactor biosynthesis; NAD(+) biosynthesis; nicotinate D-ribonucleotide from nicotinate: step 1/1. Catalyzes the synthesis of beta-nicotinate D-ribonucleotide from nicotinate and 5-phospho-D-ribose 1-phosphate at the expense of ATP. The polypeptide is Nicotinate phosphoribosyltransferase (Escherichia fergusonii (strain ATCC 35469 / DSM 13698 / CCUG 18766 / IAM 14443 / JCM 21226 / LMG 7866 / NBRC 102419 / NCTC 12128 / CDC 0568-73)).